A 236-amino-acid polypeptide reads, in one-letter code: 5'-methylthioadenosine/S-adenosylhomocysteine nucleosidase (236 aa).

E12 functions as the Proton acceptor in the catalytic mechanism. Substrate is bound by residues G78, I153, and 174-175 (ME). The active-site Proton donor is the D198.

The protein belongs to the PNP/UDP phosphorylase family. MtnN subfamily.

It carries out the reaction S-adenosyl-L-homocysteine + H2O = S-(5-deoxy-D-ribos-5-yl)-L-homocysteine + adenine. The catalysed reaction is S-methyl-5'-thioadenosine + H2O = 5-(methylsulfanyl)-D-ribose + adenine. The enzyme catalyses 5'-deoxyadenosine + H2O = 5-deoxy-D-ribose + adenine. The protein operates within amino-acid biosynthesis; L-methionine biosynthesis via salvage pathway; S-methyl-5-thio-alpha-D-ribose 1-phosphate from S-methyl-5'-thioadenosine (hydrolase route): step 1/2. Functionally, catalyzes the irreversible cleavage of the glycosidic bond in both 5'-methylthioadenosine (MTA) and S-adenosylhomocysteine (SAH/AdoHcy) to adenine and the corresponding thioribose, 5'-methylthioribose and S-ribosylhomocysteine, respectively. Also cleaves 5'-deoxyadenosine, a toxic by-product of radical S-adenosylmethionine (SAM) enzymes, into 5-deoxyribose and adenine. The protein is 5'-methylthioadenosine/S-adenosylhomocysteine nucleosidase of Shewanella baltica (strain OS223).